The chain runs to 803 residues: H(+)/Cl(-) exchange transporter 7 (803 aa).

Residues 1–46 (MANVSKKVSWSGRDRDDEEGAPLLRRTGQPDEETPLLNGAGPGARQ) form a disordered region. Residues 1 to 124 (MANVSKKVSW…TAFRTVEIKR (124 aa)) are Cytoplasmic-facing. At serine 9 the chain carries Phosphoserine. Helical transmembrane passes span 125-157 (WVIC…YRVI) and 172-195 (FSLL…VAFI). A Selectivity filter part_1 motif is present at residues 201–205 (GSGIP). Serine 202 is a binding site for chloride. The helical intramembrane region spans 204 to 211 (IPQIKCFL). A run of 2 helical transmembrane segments spans residues 221 to 239 (RLKT…VVGG) and 245 to 262 (EGPM…ISQG). The Selectivity filter part_2 signature appears at 243–247 (GKEGP). 2 intramembrane regions (helical) span residues 286–298 (FVSA…VSAA) and 302–310 (PVGGVLFSL). The next 5 membrane-spanning stretches (helical) occupy residues 320–339 (FLTW…LNFV), 373–403 (IPVF…FRIR), 408–430 (PCLQ…FVLI), 485–505 (PMTL…TYGL), and 510–533 (GVFI…LSYL). The short motif at 510-514 (GVFIP) is the Selectivity filter part_3 element. Phenylalanine 512 lines the chloride pocket. Positions 543–557 (GKYALMGAAAQLGGI) form an intramembrane region, helical. Positions 558–560 (VRM) form an intramembrane region, note=Loop between two helices. Positions 561 to 572 (TLSLTVIMMEAT) form an intramembrane region, helical. The segment at residues 573 to 576 (SNVT) is an intramembrane region (note=Loop between two helices). Residues 577–595 (YGFPIMLVLMTAKIVGDVF) form a helical membrane-spanning segment. Topologically, residues 596–803 (IEGLYDMHIQ…GLEELSLAQT (208 aa)) are cytoplasmic. Position 600 (tyrosine 600) interacts with chloride. 2 consecutive CBS domains span residues 629 to 693 (MSTP…VFVE) and 739 to 797 (MNPS…GLEE). Residues 656-658 (HNG) and 781-784 (TRKD) each bind ATP. Serine 799 carries the phosphoserine modification.

This sequence belongs to the chloride channel (TC 2.A.49) family. ClC-7/CLCN7 subfamily. Chloride channel 7 are heteromers of alpha (CLCN7) and beta (OSTM1) subunits. In terms of tissue distribution, liver, spleen, kidneys and brain.

The protein localises to the lysosome membrane. The catalysed reaction is 2 chloride(in) + H(+)(out) = 2 chloride(out) + H(+)(in). Functionally, slowly voltage-gated channel mediating the exchange of chloride ions against protons. Functions as antiporter and contributes to the acidification of the lysosome lumen and may be involved in maintaining lysosomal pH. The CLC channel family contains both chloride channels and proton-coupled anion transporters that exchange chloride or another anion for protons. The presence of conserved gating glutamate residues is typical for family members that function as antiporters. This chain is H(+)/Cl(-) exchange transporter 7, found in Mus musculus (Mouse).